The chain runs to 289 residues: Enoyl-CoA hydratase domain-containing protein 3, mitochondrial (289 aa).

Residues 1–14 (MLLRGFSELLKCRG) constitute a mitochondrion transit peptide.

This sequence belongs to the enoyl-CoA hydratase/isomerase family.

It is found in the mitochondrion. In terms of biological role, may play a role in fatty acid biosynthesis and insulin sensitivity. The sequence is that of Enoyl-CoA hydratase domain-containing protein 3, mitochondrial (echdc3) from Danio rerio (Zebrafish).